Consider the following 293-residue polypeptide: Small ribosomal subunit protein uS3 (293 aa).

Residues 39 to 107 (VREYLKAKLK…PVAVNIEEVR (69 aa)) form the KH type-2 domain. Positions 210 to 293 (RNDLPAVETP…PATAADGKGE (84 aa)) are disordered. Residues 219 to 238 (PRPEEERRPRGPRRDGRPGG) are compositionally biased toward basic and acidic residues.

The protein belongs to the universal ribosomal protein uS3 family. In terms of assembly, part of the 30S ribosomal subunit. Forms a tight complex with proteins S10 and S14.

Functionally, binds the lower part of the 30S subunit head. Binds mRNA in the 70S ribosome, positioning it for translation. The chain is Small ribosomal subunit protein uS3 from Paracidovorax citrulli (strain AAC00-1) (Acidovorax citrulli).